The following is a 360-amino-acid chain: Leukotriene B4 receptor 2 (360 aa).

Residues 1–24 (MSVCYRPPGNETLLSWKGSRATGT) are Extracellular-facing. Asn-10 carries N-linked (GlcNAc...) asparagine glycosylation. A helical membrane pass occupies residues 25–45 (AFLLLAALLGLPGNGFVVWSL). Residues 46 to 60 (AGWRPTAGRPLAATL) lie on the Cytoplasmic side of the membrane. The chain crosses the membrane as a helical span at residues 61–81 (VLHLALADGAVLLLTPLFVAF). The Extracellular portion of the chain corresponds to 82–96 (LSQEAWPLGQVGCKA). A helical transmembrane segment spans residues 97–117 (VYYVCALSMYASVLLTGLLSL). Residues 118–140 (QRCLAVTRPFLAPRLRSPALARR) lie on the Cytoplasmic side of the membrane. The chain crosses the membrane as a helical span at residues 141–161 (LLLGVWLAALVLAVPAAVYRH). Over 162-185 (LWGGRVCQLCHPSPVHAAAHLSLE) the chain is Extracellular. The helical transmembrane segment at 186–206 (TLTAFVLPFGTVLGCYGVTLA) threads the bilayer. Topologically, residues 207–224 (RLRGARWGSGRQGTRVGR) are cytoplasmic. A helical transmembrane segment spans residues 225 to 245 (LVSAIVLAFGLLWAPYHAVNL). Topologically, residues 246 to 275 (LQAVAALAPPEGPLARLGGAGQAARAGTTA) are extracellular. Residues 276–296 (LAFFSSSVNPVLYVFTAGDLL) form a helical membrane-spanning segment. At 297 to 360 (PRAGPRFLTR…GKTEKDSQEW (64 aa)) the chain is on the cytoplasmic side. Residues 311–360 (SGEARGGSRSREGTMELRTTPKLKVMGQGRGNGDPGGGDGGKTEKDSQEW) form a disordered region. The span at 338–350 (QGRGNGDPGGGDG) shows a compositional bias: gly residues. The span at 351–360 (GKTEKDSQEW) shows a compositional bias: basic and acidic residues.

Belongs to the G-protein coupled receptor 1 family.

Its subcellular location is the cell membrane. In terms of biological role, low-affinity receptor for leukotrienes including leukotriene B4. Mediates chemotaxis of granulocytes and macrophages. The response is mediated via G-proteins that activate a phosphatidylinositol-calcium second messenger system. This is Leukotriene B4 receptor 2 (Ltb4r2) from Mus musculus (Mouse).